Consider the following 434-residue polypeptide: ATP-dependent protease ATPase subunit HslU (434 aa).

ATP is bound by residues valine 18, 60–65, aspartate 247, glutamate 312, and arginine 384; that span reads GVGKTE.

It belongs to the ClpX chaperone family. HslU subfamily. In terms of assembly, a double ring-shaped homohexamer of HslV is capped on each side by a ring-shaped HslU homohexamer. The assembly of the HslU/HslV complex is dependent on binding of ATP.

It is found in the cytoplasm. In terms of biological role, ATPase subunit of a proteasome-like degradation complex; this subunit has chaperone activity. The binding of ATP and its subsequent hydrolysis by HslU are essential for unfolding of protein substrates subsequently hydrolyzed by HslV. HslU recognizes the N-terminal part of its protein substrates and unfolds these before they are guided to HslV for hydrolysis. In Rhodopseudomonas palustris (strain BisB18), this protein is ATP-dependent protease ATPase subunit HslU.